Here is a 683-residue protein sequence, read N- to C-terminus: Putative boron transporter 5 (683 aa).

Residues 1 to 38 (MEEERVEGSKRPFQGIIRDVKGRALCYKQDWIAGLRSG) are Cytoplasmic-facing. The chain crosses the membrane as a helical span at residues 39–59 (FGILAPTTYVFFASALPVIAF). The Extracellular portion of the chain corresponds to 60-80 (GEQLSHDTERSLSTVETLAST). The helical transmembrane segment at 81-101 (ALCGVIHSLLGGQPLLILGVA) threads the bilayer. The Cytoplasmic segment spans residues 102 to 126 (EPTVLMYKYLYDFAKGRPELGKQLY). Residues 127–147 (LAWVAWVCVWTALLLFLMAIF) form a helical membrane-spanning segment. The Extracellular portion of the chain corresponds to 148–158 (NMAYIINRFTR). A helical transmembrane segment spans residues 159–179 (IAGELFGMLIAVLFLQQTIKG). The Cytoplasmic segment spans residues 180–200 (MVSEFRIPKGEDSKLEKYQFE). A helical transmembrane segment spans residues 201–221 (WLYTNGLLGLIFTVGLVYTAL). The Extracellular segment spans residues 222 to 238 (KSRKARSWPYGTGCCRS). A helical membrane pass occupies residues 239-259 (FVADYGVPLMVVVWTALSFST). The Cytoplasmic portion of the chain corresponds to 260–294 (PSKLPSGVPRRLVSPLPWDSVSLTHWTVIKDMGKV). Residues 295-315 (SPGYIFAAFIPALMIAGLYFF) traverse the membrane as a helical segment. The Extracellular segment spans residues 316–335 (DHSVVSQLAQQKEFNLKNPS). A helical membrane pass occupies residues 336 to 356 (AYHYDILLLGFMVLICGMLGL). Residues 357–477 (PPSNGVLPQS…EQRVSNLLQS (121 aa)) lie on the Cytoplasmic side of the membrane. The helical transmembrane segment at 478 to 498 (LLVIGAVFALPVIKLIPTSLL) threads the bilayer. Topologically, residues 499 to 565 (WGYFAYMAID…QILYFGLCYG (67 aa)) are extracellular. Residues 566–586 (VTWIPVAGIMFPVLFFLLVAI) traverse the membrane as a helical segment. The Cytoplasmic segment spans residues 587–683 (RQYLLPKLFK…GDGDMSSSRE (97 aa)).

This sequence belongs to the anion exchanger (TC 2.A.31.3) family.

Its subcellular location is the membrane. Putative boron transporter. Boron is essential for maintaining the integrity of plants cell walls. This Arabidopsis thaliana (Mouse-ear cress) protein is Putative boron transporter 5 (BOR5).